Reading from the N-terminus, the 207-residue chain is LexA repressor (207 aa).

Positions 28 to 48 (RAEISRELGFKSANAAEEHLK) form a DNA-binding region, H-T-H motif. Residues Ser123 and Lys160 each act as for autocatalytic cleavage activity in the active site.

The protein belongs to the peptidase S24 family. As to quaternary structure, homodimer.

The enzyme catalyses Hydrolysis of Ala-|-Gly bond in repressor LexA.. Represses a number of genes involved in the response to DNA damage (SOS response), including recA and lexA. In the presence of single-stranded DNA, RecA interacts with LexA causing an autocatalytic cleavage which disrupts the DNA-binding part of LexA, leading to derepression of the SOS regulon and eventually DNA repair. This chain is LexA repressor, found in Haemophilus influenzae (strain 86-028NP).